The following is a 53-amino-acid chain: UPF0337 protein LJ_0034.1 (53 aa).

Residues 27 to 53 are disordered; that stretch reads AREVEGKAQQAKGKVKSKATEVKEDLE. The span at 44-53 shows a compositional bias: basic and acidic residues; that stretch reads KATEVKEDLE.

This sequence belongs to the UPF0337 (CsbD) family.

The sequence is that of UPF0337 protein LJ_0034.1 from Lactobacillus johnsonii (strain CNCM I-12250 / La1 / NCC 533).